The following is a 447-amino-acid chain: Tyrosine aminotransferase (447 aa).

Lys-273 is modified (N6-(pyridoxal phosphate)lysine). A Phosphoserine modification is found at Ser-441.

It belongs to the class-I pyridoxal-phosphate-dependent aminotransferase family. In terms of assembly, homodimer. Pyridoxal 5'-phosphate serves as cofactor.

The enzyme catalyses L-tyrosine + 2-oxoglutarate = 3-(4-hydroxyphenyl)pyruvate + L-glutamate. The protein operates within amino-acid degradation; L-phenylalanine degradation; acetoacetate and fumarate from L-phenylalanine: step 2/6. Its function is as follows. Transaminase involved in tyrosine breakdown. Converts tyrosine to p-hydroxyphenylpyruvate. Can catalyze the reverse reaction, using glutamic acid, with 2-oxoglutarate as cosubstrate (in vitro). Has much lower affinity and transaminase activity for phenylalanine. In Bos taurus (Bovine), this protein is Tyrosine aminotransferase (TAT).